A 430-amino-acid polypeptide reads, in one-letter code: Tryptophan synthase beta chain (430 aa).

Lys95 carries the N6-(pyridoxal phosphate)lysine modification.

Belongs to the TrpB family. As to quaternary structure, tetramer of two alpha and two beta chains. Requires pyridoxal 5'-phosphate as cofactor.

The enzyme catalyses (1S,2R)-1-C-(indol-3-yl)glycerol 3-phosphate + L-serine = D-glyceraldehyde 3-phosphate + L-tryptophan + H2O. It functions in the pathway amino-acid biosynthesis; L-tryptophan biosynthesis; L-tryptophan from chorismate: step 5/5. The beta subunit is responsible for the synthesis of L-tryptophan from indole and L-serine. This is Tryptophan synthase beta chain from Halobacterium salinarum (strain ATCC 29341 / DSM 671 / R1).